A 391-amino-acid chain; its full sequence is ATP phosphoribosyltransferase regulatory subunit (391 aa).

This sequence belongs to the class-II aminoacyl-tRNA synthetase family. HisZ subfamily. As to quaternary structure, heteromultimer composed of HisG and HisZ subunits.

The protein localises to the cytoplasm. Its pathway is amino-acid biosynthesis; L-histidine biosynthesis; L-histidine from 5-phospho-alpha-D-ribose 1-diphosphate: step 1/9. Required for the first step of histidine biosynthesis. May allow the feedback regulation of ATP phosphoribosyltransferase activity by histidine. The polypeptide is ATP phosphoribosyltransferase regulatory subunit (Bacillus licheniformis (strain ATCC 14580 / DSM 13 / JCM 2505 / CCUG 7422 / NBRC 12200 / NCIMB 9375 / NCTC 10341 / NRRL NRS-1264 / Gibson 46)).